The chain runs to 165 residues: Nucleotide-binding protein Pro_0479 (165 aa).

The protein belongs to the YajQ family.

In terms of biological role, nucleotide-binding protein. This Prochlorococcus marinus (strain SARG / CCMP1375 / SS120) protein is Nucleotide-binding protein Pro_0479.